Reading from the N-terminus, the 349-residue chain is Arginine kinase (349 aa).

In terms of domain architecture, Phosphagen kinase N-terminal spans Asp3–Lys85. Position 58-62 (Gly58–Tyr62) interacts with substrate. Residues Trp113–Ala349 enclose the Phosphagen kinase C-terminal domain. Residues Ser116–Arg120 and His179 contribute to the ATP site. Glu219 provides a ligand contact to substrate. An ATP-binding site is contributed by Arg223. Cys265 contributes to the substrate binding site. ATP is bound by residues Arg274 to His278 and Arg302 to Glu307. Glu307 contacts substrate.

The protein belongs to the ATP:guanido phosphotransferase family.

The catalysed reaction is L-arginine + ATP = N(omega)-phospho-L-arginine + ADP + H(+). The sequence is that of Arginine kinase from Liolophura japonica (Chiton).